Consider the following 251-residue polypeptide: DNA repair protein RecO (251 aa).

Belongs to the RecO family.

Its function is as follows. Involved in DNA repair and RecF pathway recombination. The chain is DNA repair protein RecO from Acidiphilium cryptum (strain JF-5).